The following is a 568-amino-acid chain: MSNKNPLNNSNGSNSSTIVNSDKFLVKIHSLSVSHTSKSSNIYLVGDFDQFKQFKTETKKSSSTHGSCIYNEFAMEFQYETKYIHKLDHKHFKICVYKKKSIGSDKYIGSFGVDLYTLATGPISHDVVFQKDNTGVGRLQFRLEMNHITDIQISFKSILLSNLMKQSNYQIDYSLNKINPLKSSIIENTICPSWYNQSSILMNISLKDLVDGSIFFNLKDTKSSKVIGELKLPVKSIFSFVEGDIKIVKTLLYNEKQNKICDACIEIQFNNIPQLAQLRGGIQTEQGIRGAESFFSGVPLPKIIGEISNASTSDGYSKEAQLQHVKLPDGWESRIDPVSGKVFYLNHNNKTTSWISPLEHAPVKKRTPTVVISNTTILDNNNNNNNNNNNNNNNNNNNNNNINNTNNIQQKQQAQQQPVQPPPQPVQQQVQQPQQKEKEKEKEINAEDYKISRPKKTPATPEEAAVIIQRTFRNHKKQSYNKTIRNSKTIIPPNNVQQQQPQQTEKPSIYQVFGQQIDQGLPNGWEVRQDQFGRVFYVDHINRATTWTRPTVKHPKQHQQATLVQQRK.

The C2 domain maps to 6–129 (PLNNSNGSNS…TGPISHDVVF (124 aa)). The 35-residue stretch at 325-359 (VKLPDGWESRIDPVSGKVFYLNHNNKTTSWISPLE) folds into the WW 1 domain. The disordered stretch occupies residues 376–461 (TILDNNNNNN…SRPKKTPATP (86 aa)). Residues 380-418 (NNNNNNNNNNNNNNNNNNNNNNINNTNNIQQKQQAQQQP) show a composition bias toward low complexity. The span at 435-451 (QKEKEKEKEINAEDYKI) shows a compositional bias: basic and acidic residues. One can recognise a WW 2 domain in the interval 519-552 (QGLPNGWEVRQDQFGRVFYVDHINRATTWTRPTV).

As to quaternary structure, interacts with calmodulin in the absence of Ca(2+).

It is found in the nucleus. Its subcellular location is the nucleolus. The protein resides in the cytoplasm. It localises to the cell cortex. The protein localises to the cytoskeleton. Functionally, involved in regulation of actin cytoskeleton organization and cytokinesis. The sequence is that of WW domain-containing protein A from Dictyostelium discoideum (Social amoeba).